A 190-amino-acid polypeptide reads, in one-letter code: MKVIVGLGNPGREYENTRHNVGWWLIDTLKERWHFEPWRKDGDAVSTTGLVGTKKVKLVKPQTYMNLSGSVLRPYLKREGWTAAQDLMVLVDEVAVPVGEYRLRAAGSPGGHNGLKSIEAHLKSPTYPRLRVGIKPVDERRQIGDLADFVLHTMPRDERALVDDITPRMIDAIELWIAEGTEKAVSSMGR.

Tyrosine 14 provides a ligand contact to tRNA. Histidine 19 serves as the catalytic Proton acceptor. TRNA-binding residues include tyrosine 64, asparagine 66, and asparagine 113.

It belongs to the PTH family. As to quaternary structure, monomer.

It localises to the cytoplasm. It catalyses the reaction an N-acyl-L-alpha-aminoacyl-tRNA + H2O = an N-acyl-L-amino acid + a tRNA + H(+). Its function is as follows. Hydrolyzes ribosome-free peptidyl-tRNAs (with 1 or more amino acids incorporated), which drop off the ribosome during protein synthesis, or as a result of ribosome stalling. Catalyzes the release of premature peptidyl moieties from peptidyl-tRNA molecules trapped in stalled 50S ribosomal subunits, and thus maintains levels of free tRNAs and 50S ribosomes. This chain is Peptidyl-tRNA hydrolase, found in Gemmatimonas aurantiaca (strain DSM 14586 / JCM 11422 / NBRC 100505 / T-27).